The following is a 142-amino-acid chain: Small ribosomal subunit protein uS12 (142 aa).

The tract at residues 1–44 is disordered; it reads MANGKYAARKLKQDRQKHRWSDSDYARRARGLGKKSDPLEGAPQ. A compositionally biased stretch (basic and acidic residues) spans 11 to 27; the sequence is LKQDRQKHRWSDSDYAR.

Belongs to the universal ribosomal protein uS12 family. As to quaternary structure, part of the 30S ribosomal subunit.

With S4 and S5 plays an important role in translational accuracy. Located at the interface of the 30S and 50S subunits. In Natronomonas pharaonis (strain ATCC 35678 / DSM 2160 / CIP 103997 / JCM 8858 / NBRC 14720 / NCIMB 2260 / Gabara) (Halobacterium pharaonis), this protein is Small ribosomal subunit protein uS12.